The sequence spans 282 residues: Undecaprenyl-diphosphatase (282 aa).

The next 6 membrane-spanning stretches (helical) occupy residues 90–110, 121–141, 165–185, 194–214, 228–248, and 256–276; these read YWLG…GLVC, LWVV…AEYV, LALI…LFLG, FGFL…IPDA, QLLV…SWLL, and LYWF…LLAV.

It belongs to the UppP family.

The protein localises to the cell membrane. It carries out the reaction di-trans,octa-cis-undecaprenyl diphosphate + H2O = di-trans,octa-cis-undecaprenyl phosphate + phosphate + H(+). Catalyzes the dephosphorylation of undecaprenyl diphosphate (UPP). Confers resistance to bacitracin. The polypeptide is Undecaprenyl-diphosphatase (Mycobacterium leprae (strain Br4923)).